The sequence spans 444 residues: Cysteine proteinase 2 (444 aa).

Residues 1-19 (MATSRAALCAVAVVCVVLA) constitute a signal peptide (or 27). A propeptide spans 20 to 124 (AACAPARAIH…HYRKARADLS (105 aa)) (activation peptide). A disulfide bridge connects residues Cys147 and Cys188. Cys150 is a catalytic residue. Asn228 carries an N-linked (GlcNAc...) asparagine glycan. Residues His289 and Asn309 contribute to the active site. Residue Asn372 is glycosylated (N-linked (GlcNAc...) asparagine).

It belongs to the peptidase C1 family.

It is found in the lysosome. Functionally, the cysteine proteinases have a potential role in host-parasite interaction and virulence. In Leishmania pifanoi, this protein is Cysteine proteinase 2 (CYS2).